Reading from the N-terminus, the 546-residue chain is Putative serine hydroxymethyltransferase, mitochondrial (546 aa).

The N-terminal 64 residues, 1-64 (MSSFQSTAAV…RFSSSSIAND (64 aa)), are a transit peptide targeting the mitochondrion. At lysine 305 the chain carries N6-(pyridoxal phosphate)lysine.

This sequence belongs to the SHMT family. In terms of assembly, homotetramer. Requires pyridoxal 5'-phosphate as cofactor.

The protein localises to the mitochondrion. It catalyses the reaction (6R)-5,10-methylene-5,6,7,8-tetrahydrofolate + glycine + H2O = (6S)-5,6,7,8-tetrahydrofolate + L-serine. The protein operates within one-carbon metabolism; tetrahydrofolate interconversion. Its function is as follows. Interconversion of serine and glycine. The polypeptide is Putative serine hydroxymethyltransferase, mitochondrial (cbs-2) (Neurospora crassa (strain ATCC 24698 / 74-OR23-1A / CBS 708.71 / DSM 1257 / FGSC 987)).